Here is a 378-residue protein sequence, read N- to C-terminus: Chaperone protein DnaJ (378 aa).

Residues 5 to 69 form the J domain; sequence EFYDRLGVSK…QKRAAYDQYG (65 aa). Residues 135–217 form a CR-type zinc finger; that stretch reads GTEKEVKYHR…CHGTGHEKQA (83 aa). Zn(2+)-binding residues include Cys148, Cys151, Cys165, Cys168, Cys191, Cys194, Cys205, and Cys208. 4 CXXCXGXG motif repeats span residues 148-155, 165-172, 191-198, and 205-212; these read CRTCNGSG, CGRCHGAG, CDVCHGRG, and CTTCHGTG.

This sequence belongs to the DnaJ family. In terms of assembly, homodimer. Requires Zn(2+) as cofactor.

The protein localises to the cytoplasm. Participates actively in the response to hyperosmotic and heat shock by preventing the aggregation of stress-denatured proteins and by disaggregating proteins, also in an autonomous, DnaK-independent fashion. Unfolded proteins bind initially to DnaJ; upon interaction with the DnaJ-bound protein, DnaK hydrolyzes its bound ATP, resulting in the formation of a stable complex. GrpE releases ADP from DnaK; ATP binding to DnaK triggers the release of the substrate protein, thus completing the reaction cycle. Several rounds of ATP-dependent interactions between DnaJ, DnaK and GrpE are required for fully efficient folding. Also involved, together with DnaK and GrpE, in the DNA replication of plasmids through activation of initiation proteins. The polypeptide is Chaperone protein DnaJ (Streptococcus pneumoniae serotype 4 (strain ATCC BAA-334 / TIGR4)).